The following is a 405-amino-acid chain: Na(+)/H(+) antiporter NhaA 1 (405 aa).

Helical transmembrane passes span 20 to 40 (FVSD…AMIV), 68 to 88 (LHLW…GLEV), 105 to 125 (LPVL…VGVV), 134 to 154 (GWAI…GLLG), 163 to 183 (LFLL…IAAF), 186 to 206 (ANLK…MVGM), 214 to 234 (IWPY…SGVH), 263 to 283 (GLAP…NAGV), 301 to 321 (IAAG…VAAV), 334 to 354 (WIEI…SLFI), and 371 to 391 (IGIL…LRLT).

The protein belongs to the NhaA Na(+)/H(+) (TC 2.A.33) antiporter family.

Its subcellular location is the cell inner membrane. The enzyme catalyses Na(+)(in) + 2 H(+)(out) = Na(+)(out) + 2 H(+)(in). Its function is as follows. Na(+)/H(+) antiporter that extrudes sodium in exchange for external protons. This Erythrobacter litoralis (strain HTCC2594) protein is Na(+)/H(+) antiporter NhaA 1.